Consider the following 362-residue polypeptide: Holliday junction branch migration complex subunit RuvB (362 aa).

Residues 4-186 (PDRPQRLVEQ…FGIPLRMQFY (183 aa)) are large ATPase domain (RuvB-L). Residues isoleucine 25, arginine 26, glycine 67, lysine 70, threonine 71, threonine 72, 133-135 (EDF), arginine 176, tyrosine 186, and arginine 223 contribute to the ATP site. Threonine 71 provides a ligand contact to Mg(2+). Residues 187 to 257 (EPEELQLIVA…AAGGALTRLE (71 aa)) form a small ATPAse domain (RuvB-S) region. A head domain (RuvB-H) region spans residues 260–362 (RLGFDAMDRR…GTPEGEGEDV (103 aa)). DNA is bound by residues arginine 296, arginine 315, and arginine 320.

The protein belongs to the RuvB family. As to quaternary structure, homohexamer. Forms an RuvA(8)-RuvB(12)-Holliday junction (HJ) complex. HJ DNA is sandwiched between 2 RuvA tetramers; dsDNA enters through RuvA and exits via RuvB. An RuvB hexamer assembles on each DNA strand where it exits the tetramer. Each RuvB hexamer is contacted by two RuvA subunits (via domain III) on 2 adjacent RuvB subunits; this complex drives branch migration. In the full resolvosome a probable DNA-RuvA(4)-RuvB(12)-RuvC(2) complex forms which resolves the HJ.

Its subcellular location is the cytoplasm. It catalyses the reaction ATP + H2O = ADP + phosphate + H(+). The RuvA-RuvB-RuvC complex processes Holliday junction (HJ) DNA during genetic recombination and DNA repair, while the RuvA-RuvB complex plays an important role in the rescue of blocked DNA replication forks via replication fork reversal (RFR). RuvA specifically binds to HJ cruciform DNA, conferring on it an open structure. The RuvB hexamer acts as an ATP-dependent pump, pulling dsDNA into and through the RuvAB complex. RuvB forms 2 homohexamers on either side of HJ DNA bound by 1 or 2 RuvA tetramers; 4 subunits per hexamer contact DNA at a time. Coordinated motions by a converter formed by DNA-disengaged RuvB subunits stimulates ATP hydrolysis and nucleotide exchange. Immobilization of the converter enables RuvB to convert the ATP-contained energy into a lever motion, pulling 2 nucleotides of DNA out of the RuvA tetramer per ATP hydrolyzed, thus driving DNA branch migration. The RuvB motors rotate together with the DNA substrate, which together with the progressing nucleotide cycle form the mechanistic basis for DNA recombination by continuous HJ branch migration. Branch migration allows RuvC to scan DNA until it finds its consensus sequence, where it cleaves and resolves cruciform DNA. The chain is Holliday junction branch migration complex subunit RuvB from Rhodospirillum centenum (strain ATCC 51521 / SW).